The following is a 75-amino-acid chain: Probable pilin MJ0431 (75 aa).

Positions 1–15 (MGKMKILKKLLSKKG) are excised as a propeptide. The QXSXEXXXL signature appears at 16-24 (QLSMEVGVL).

In terms of processing, the N-terminus is cleaved by the prepilin peptidase EppA, which recognizes the class III signal sequence.

It is found in the secreted. It localises to the cell surface. The protein localises to the fimbrium. The chain is Probable pilin MJ0431 from Methanocaldococcus jannaschii (strain ATCC 43067 / DSM 2661 / JAL-1 / JCM 10045 / NBRC 100440) (Methanococcus jannaschii).